The primary structure comprises 276 residues: Ribosomal RNA small subunit methyltransferase A (276 aa).

Residues Asn27, Leu29, Gly54, Glu75, Asp101, and Asn122 each coordinate S-adenosyl-L-methionine.

The protein belongs to the class I-like SAM-binding methyltransferase superfamily. rRNA adenine N(6)-methyltransferase family. RsmA subfamily.

It localises to the cytoplasm. The enzyme catalyses adenosine(1518)/adenosine(1519) in 16S rRNA + 4 S-adenosyl-L-methionine = N(6)-dimethyladenosine(1518)/N(6)-dimethyladenosine(1519) in 16S rRNA + 4 S-adenosyl-L-homocysteine + 4 H(+). Its function is as follows. Specifically dimethylates two adjacent adenosines (A1518 and A1519) in the loop of a conserved hairpin near the 3'-end of 16S rRNA in the 30S particle. May play a critical role in biogenesis of 30S subunits. The chain is Ribosomal RNA small subunit methyltransferase A from Brucella melitensis biotype 1 (strain ATCC 23456 / CCUG 17765 / NCTC 10094 / 16M).